The primary structure comprises 252 residues: Ditrans,polycis-undecaprenyl-diphosphate synthase ((2E,6E)-farnesyl-diphosphate specific) (252 aa).

The active site involves Asp-25. Asp-25 provides a ligand contact to Mg(2+). Substrate is bound by residues 26 to 29, Trp-30, Arg-38, His-42, and 70 to 72; these read GNGR and SSE. The Proton acceptor role is filled by Asn-73. The substrate site is built by Trp-74, Arg-76, and Arg-193. His-198 contacts Mg(2+). Substrate is bound at residue 199–201; sequence RIS. Residue Glu-212 participates in Mg(2+) binding.

The protein belongs to the UPP synthase family. Homodimer. Requires Mg(2+) as cofactor.

The catalysed reaction is 8 isopentenyl diphosphate + (2E,6E)-farnesyl diphosphate = di-trans,octa-cis-undecaprenyl diphosphate + 8 diphosphate. Its function is as follows. Catalyzes the sequential condensation of isopentenyl diphosphate (IPP) with (2E,6E)-farnesyl diphosphate (E,E-FPP) to yield (2Z,6Z,10Z,14Z,18Z,22Z,26Z,30Z,34E,38E)-undecaprenyl diphosphate (di-trans,octa-cis-UPP). UPP is the precursor of glycosyl carrier lipid in the biosynthesis of bacterial cell wall polysaccharide components such as peptidoglycan and lipopolysaccharide. The sequence is that of Ditrans,polycis-undecaprenyl-diphosphate synthase ((2E,6E)-farnesyl-diphosphate specific) from Salmonella typhi.